A 342-amino-acid polypeptide reads, in one-letter code: uncharacterized protein (342 aa).

Belongs to the cycloisomerase 2 family.

This is an uncharacterized protein from Staphylococcus aureus (strain bovine RF122 / ET3-1).